A 670-amino-acid chain; its full sequence is Cyclic di-GMP phosphodiesterase PdeA (670 aa).

In terms of domain architecture, EAL spans 428–670 (QNKIFQYILK…GFLWHKPEPI (243 aa)).

The enzyme catalyses 3',3'-c-di-GMP + H2O = 5'-phosphoguanylyl(3'-&gt;5')guanosine + H(+). Phosphodiesterase (PDE) that catalyzes the hydrolysis of cyclic diguanylate (c-di-GMP) to pGpG. In Borreliella burgdorferi (strain ATCC 35210 / DSM 4680 / CIP 102532 / B31) (Borrelia burgdorferi), this protein is Cyclic di-GMP phosphodiesterase PdeA.